A 360-amino-acid chain; its full sequence is UDP-N-acetylglucosamine--N-acetylmuramyl-(pentapeptide) pyrophosphoryl-undecaprenol N-acetylglucosamine transferase (360 aa).

Residues Ser-198 and Gln-289 each coordinate UDP-N-acetyl-alpha-D-glucosamine.

This sequence belongs to the glycosyltransferase 28 family. MurG subfamily.

Its subcellular location is the cell membrane. The enzyme catalyses Mur2Ac(oyl-L-Ala-gamma-D-Glu-L-Lys-D-Ala-D-Ala)-di-trans,octa-cis-undecaprenyl diphosphate + UDP-N-acetyl-alpha-D-glucosamine = beta-D-GlcNAc-(1-&gt;4)-Mur2Ac(oyl-L-Ala-gamma-D-Glu-L-Lys-D-Ala-D-Ala)-di-trans,octa-cis-undecaprenyl diphosphate + UDP + H(+). Its pathway is cell wall biogenesis; peptidoglycan biosynthesis. Cell wall formation. Catalyzes the transfer of a GlcNAc subunit on undecaprenyl-pyrophosphoryl-MurNAc-pentapeptide (lipid intermediate I) to form undecaprenyl-pyrophosphoryl-MurNAc-(pentapeptide)GlcNAc (lipid intermediate II). In Streptococcus pyogenes serotype M6 (strain ATCC BAA-946 / MGAS10394), this protein is UDP-N-acetylglucosamine--N-acetylmuramyl-(pentapeptide) pyrophosphoryl-undecaprenol N-acetylglucosamine transferase.